The primary structure comprises 335 residues: Serpentine receptor class XA 10 (335 aa).

Residues 1-10 (MDVDAAVVKR) are Extracellular-facing. Residues 11–31 (IALWVYETCSVFNLFYCITLS) traverse the membrane as a helical segment. At 32-46 (LAIKTSKNNALPATY) the chain is on the cytoplasmic side. Residues 47–67 (IYNMAISNALLVIFGIMVYIL) traverse the membrane as a helical segment. Over 68–82 (PYYMSDKTYKTYRDS) the chain is Extracellular. The helical transmembrane segment at 83-103 (IGAMISVGVTFNYLHPMLTLI) threads the bilayer. Residues 104–126 (LMTINRIAVVVSMQASQLFTSSK) lie on the Cytoplasmic side of the membrane. The chain crosses the membrane as a helical span at residues 127-147 (IWLYTSFHMTANFACLIIPYL). At 148-177 (SECRINYDIRKVGFISECAPDRHQITTFSN) the chain is on the extracellular side. The helical transmembrane segment at 178–198 (YYSVFFPFVAFFFNVLVIINF) threads the bilayer. At 199–238 (KLQRSPTYTKIKNMFRRGNGDQFTSMPSDVLKAKKKTERM) the chain is on the cytoplasmic side. A helical membrane pass occupies residues 239–259 (LMIQAFITAFYLSVYELTSLV). The Extracellular segment spans residues 260–276 (LRVVPELFGNLSLDGKL). The chain crosses the membrane as a helical span at residues 277-297 (AFTYFRLAQVPCHVFLVYFIF). The Cytoplasmic segment spans residues 298–319 (TPVTRKIYMDFVRERVFCMKPA).

This sequence belongs to the nematode receptor-like protein srxa family.

The protein resides in the membrane. This chain is Serpentine receptor class XA 10 (srxa-10), found in Caenorhabditis elegans.